A 322-amino-acid polypeptide reads, in one-letter code: Pantothenate kinase (322 aa).

Residue 100-107 (GSVAVGKS) participates in ATP binding.

This sequence belongs to the prokaryotic pantothenate kinase family.

It is found in the cytoplasm. The enzyme catalyses (R)-pantothenate + ATP = (R)-4'-phosphopantothenate + ADP + H(+). It participates in cofactor biosynthesis; coenzyme A biosynthesis; CoA from (R)-pantothenate: step 1/5. In Brucella abortus (strain 2308), this protein is Pantothenate kinase.